Here is a 979-residue protein sequence, read N- to C-terminus: Mast/stem cell growth factor receptor Kit (979 aa).

The first 27 residues, 1–27, serve as a signal peptide directing secretion; sequence MRGARGAWDFLCVLLLLLLLGVQTGSS. The Extracellular segment spans residues 28–527; sequence QPSVSPGEPS…QIHPHTLFTP (500 aa). 5 consecutive Ig-like C2-type domains span residues 29–114, 123–207, 214–311, 320–413, and 416–510; these read PSVS…VFVR, DLPL…LKVR, PVVS…LEVV, PMMS…VYVN, and PEIL…FNFA. Cysteines 60 and 99 form a disulfide. N-linked (GlcNAc...) asparagine glycosylation is found at asparagine 96, asparagine 132, and asparagine 147. Intrachain disulfides connect cysteine 138–cysteine 188, cysteine 153–cysteine 185, and cysteine 235–cysteine 293. 8 N-linked (GlcNAc...) asparagine glycosylation sites follow: asparagine 286, asparagine 296, asparagine 303, asparagine 355, asparagine 370, asparagine 403, asparagine 466, and asparagine 489. An intrachain disulfide couples cysteine 431 to cysteine 494. A helical membrane pass occupies residues 528–548; the sequence is LLIGFVIAAGMMCIIVMILTY. Residues 549–979 lie on the Cytoplasmic side of the membrane; sequence KYLQKPMYEV…TQPLLVHEDV (431 aa). Residues tyrosine 550, tyrosine 556, tyrosine 571, and tyrosine 573 each carry the phosphotyrosine; by autocatalysis modification. A Mg(2+)-binding site is contributed by tyrosine 571. The interval 571-573 is important for interaction with phosphotyrosine-binding proteins; it reads YVY. The region spanning 592 to 940 is the Protein kinase domain; the sequence is LSFGKTLGAG…ISDSTNHIYS (349 aa). Residues 599 to 606, lysine 626, and 674 to 680 contribute to the ATP site; these read GAGAFGKV and EYCCYGD. Tyrosine 706, tyrosine 724, and tyrosine 733 each carry phosphotyrosine; by autocatalysis. Phosphoserine; by PKC/PRKCA occurs at positions 744 and 749. The Proton acceptor role is filled by aspartate 795. Arginine 799 serves as a coordination point for ATP. Residues asparagine 800 and aspartate 813 each coordinate Mg(2+). Serine 824 is modified (phosphoserine). Residue tyrosine 826 is modified to Phosphotyrosine; by autocatalysis. A Phosphoserine modification is found at serine 894. Phosphotyrosine; by autocatalysis occurs at positions 903 and 939. The residue at position 962 (serine 962) is a Phosphoserine.

This sequence belongs to the protein kinase superfamily. Tyr protein kinase family. CSF-1/PDGF receptor subfamily. Monomer in the absence of bound KITLG/SCF. Homodimer in the presence of bound KITLG/SCF, forming a heterotetramer with two KITLG/SCF molecules. Interacts (via phosphorylated tyrosine residues) with the adapter proteins GRB2 and GRB7 (via SH2 domain), and SH2B2/APS. Interacts (via C-terminus) with MPDZ (via the tenth PDZ domain). Interacts (via phosphorylated tyrosine residues) with PIK3R1 and PIK3 catalytic subunit. Interacts (via phosphorylated tyrosine) with CRK (isoform Crk-II), FYN, SHC1 and MATK/CHK (via SH2 domain). Interacts with LYN and FES/FPS. Interacts (via phosphorylated tyrosine residues) with the protein phosphatases PTPN6/SHP-1 (via SH2 domain), PTPN11/SHP-2 (via SH2 domain) and PTPRU. Interacts with PLCG1. Interacts with DOK1 and TEC. Interacts with IL1RAP (independent of stimulation with KITLG/SCF). A mast cell-specific KITLG/SCF-induced interleukin-33 signaling complex contains IL1RL1, IL1RAP, KIT and MYD88. Ubiquitinated by SOCS6. KIT is rapidly ubiquitinated after autophosphorylation induced by KITLG/SCF binding, leading to internalization and degradation. In terms of processing, autophosphorylated on tyrosine residues. KITLG/SCF binding promotes autophosphorylation. Phosphorylated tyrosine residues are important for interaction with specific binding partners.

The protein localises to the cell membrane. It carries out the reaction L-tyrosyl-[protein] + ATP = O-phospho-L-tyrosyl-[protein] + ADP + H(+). Its activity is regulated as follows. Present in an inactive conformation in the absence of bound ligand. KITLG/SCF binding leads to dimerization and activation by autophosphorylation on tyrosine residues. Activity is down-regulated by PRKCA-mediated phosphorylation on serine residues. Tyrosine-protein kinase that acts as a cell-surface receptor for the cytokine KITLG/SCF and plays an essential role in the regulation of cell survival and proliferation, hematopoiesis, stem cell maintenance, gametogenesis, mast cell development, migration and function, and in melanogenesis. In response to KITLG/SCF binding, KIT can activate several signaling pathways. Phosphorylates PIK3R1, PLCG1, SH2B2/APS and CBL. Activates the AKT1 signaling pathway by phosphorylation of PIK3R1, the regulatory subunit of phosphatidylinositol 3-kinase. Activated KIT also transmits signals via GRB2 and activation of RAS, RAF1 and the MAP kinases MAPK1/ERK2 and/or MAPK3/ERK1. Promotes activation of STAT family members STAT1, STAT3, STAT5A and STAT5B. Activation of PLCG1 leads to the production of the cellular signaling molecules diacylglycerol and inositol 1,4,5-trisphosphate. KIT signaling is modulated by protein phosphatases, and by rapid internalization and degradation of the receptor. Activated KIT promotes phosphorylation of the protein phosphatases PTPN6/SHP-1 and PTPRU, and of the transcription factors STAT1, STAT3, STAT5A and STAT5B. Promotes phosphorylation of PIK3R1, CBL, CRK (isoform Crk-II), LYN, MAPK1/ERK2 and/or MAPK3/ERK1, PLCG1, SRC and SHC1. This Canis lupus familiaris (Dog) protein is Mast/stem cell growth factor receptor Kit (KIT).